We begin with the raw amino-acid sequence, 633 residues long: Extracellular metalloproteinase 3 (633 aa).

An N-terminal signal peptide occupies residues M1–A18. Residues H19–S246 constitute a propeptide that is removed on maturation. N410 is a glycosylation site (N-linked (GlcNAc...) asparagine). H429 contacts Zn(2+). The active site involves E430. H433 contacts Zn(2+). N-linked (GlcNAc...) asparagine glycosylation is found at N480 and N622.

Belongs to the peptidase M36 family. Zn(2+) serves as cofactor.

The protein localises to the secreted. Its function is as follows. Secreted metalloproteinase probably acting as a virulence factor. In Trichophyton equinum (Horse ringworm fungus), this protein is Extracellular metalloproteinase 3 (MEP3).